Reading from the N-terminus, the 203-residue chain is Holliday junction branch migration complex subunit RuvA (203 aa).

Residues 1 to 63 (MIVSLRGTVE…EESQTLYGFT (63 aa)) form a domain I region. The tract at residues 64 to 142 (DDASRRMFVL…GFNDGIPAAA (79 aa)) is domain II. The segment at 143–150 (QPQLSIAV) is flexible linker. Positions 150–203 (VDQAVQEQVLEALVGLGFSEKIALPVLSRVLRDSPELSKSQALRAALSELGTKN) are domain III.

Belongs to the RuvA family. In terms of assembly, homotetramer. Forms an RuvA(8)-RuvB(12)-Holliday junction (HJ) complex. HJ DNA is sandwiched between 2 RuvA tetramers; dsDNA enters through RuvA and exits via RuvB. An RuvB hexamer assembles on each DNA strand where it exits the tetramer. Each RuvB hexamer is contacted by two RuvA subunits (via domain III) on 2 adjacent RuvB subunits; this complex drives branch migration. In the full resolvosome a probable DNA-RuvA(4)-RuvB(12)-RuvC(2) complex forms which resolves the HJ.

The protein localises to the cytoplasm. The RuvA-RuvB-RuvC complex processes Holliday junction (HJ) DNA during genetic recombination and DNA repair, while the RuvA-RuvB complex plays an important role in the rescue of blocked DNA replication forks via replication fork reversal (RFR). RuvA specifically binds to HJ cruciform DNA, conferring on it an open structure. The RuvB hexamer acts as an ATP-dependent pump, pulling dsDNA into and through the RuvAB complex. HJ branch migration allows RuvC to scan DNA until it finds its consensus sequence, where it cleaves and resolves the cruciform DNA. In Corynebacterium diphtheriae (strain ATCC 700971 / NCTC 13129 / Biotype gravis), this protein is Holliday junction branch migration complex subunit RuvA.